The following is an 873-amino-acid chain: Protein SEY1 (873 aa).

The disordered stretch occupies residues 1 to 21 (MVANGHFAGSADGQDSSSYEH). Residues 1 to 749 (MVANGHFAGS…KRSAIGGITQ (749 aa)) are Cytoplasmic-facing. One can recognise a GB1/RHD3-type G domain in the interval 49 to 307 (GFNYHLISVF…IPADGFAVYA (259 aa)). 59–66 (GSQSTGKS) is a GTP binding site. Positions 482 to 506 (SNYQQELSLYQKDLERTSGQLRRDE) form a coiled coil. Positions 676–703 (LDKWIGHTPSSATPADEEDLTPIGGVDD) are disordered. Residues 690–703 (ADEEDLTPIGGVDD) are compositionally biased toward acidic residues. Residues 750 to 770 (VPLYFYGLLFALGWNEILAVL) traverse the membrane as a helical segment. Residues 771-773 (RNP) are Lumenal-facing. A helical membrane pass occupies residues 774–794 (VYFLLLFVCAIGAYITYQLNL). Topologically, residues 795–873 (WGPIIKMTEA…EDVDDDDDDF (79 aa)) are cytoplasmic. The tract at residues 828–873 (RQAMAMSGARNATEEHEMSRLSRKPAERGGRKNRADEDVDDDDDDF) is disordered. Over residues 839-863 (ATEEHEMSRLSRKPAERGGRKNRAD) the composition is skewed to basic and acidic residues. Residues 864 to 873 (EDVDDDDDDF) show a composition bias toward acidic residues.

Belongs to the TRAFAC class dynamin-like GTPase superfamily. GB1/RHD3 GTPase family. RHD3 subfamily.

The protein resides in the endoplasmic reticulum membrane. Functionally, cooperates with the reticulon proteins and tubule-shaping DP1 family proteins to generate and maintain the structure of the tubular endoplasmic reticulum network. Has GTPase activity, which is required for its function in ER organization. This is Protein SEY1 from Ajellomyces capsulatus (strain G186AR / H82 / ATCC MYA-2454 / RMSCC 2432) (Darling's disease fungus).